The chain runs to 576 residues: RNA-binding post-transcriptional regulator cip2 (576 aa).

Residues 232–310 form the RRM domain; it reads TAIVIKNIPF…RRLRVEWKRQ (79 aa). The R3H domain maps to 355 to 420; the sequence is DPAILNVYSH…AKQVVITMPS (66 aa).

In terms of assembly, interacts with csx1. Post-translationally, phosphorylated by sty1.

It localises to the cytoplasm. In terms of biological role, regulates global gene expression after oxidative stress. Interacts and stabilizes mRNAs and may regulate their transition between different cytoplasmic components after oxidative stress. The sequence is that of RNA-binding post-transcriptional regulator cip2 (cip2) from Schizosaccharomyces pombe (strain 972 / ATCC 24843) (Fission yeast).